Reading from the N-terminus, the 339-residue chain is Ketol-acid reductoisomerase (NADP(+)) (339 aa).

One can recognise a KARI N-terminal Rossmann domain in the interval 1–182 (MKVYYDSDAD…GGGRSGVIET (182 aa)). Residues 24-27 (YGSQ), Arg48, Ser51, Ser53, and 83-86 (DEHQ) each bind NADP(+). His108 is a catalytic residue. Gly134 serves as a coordination point for NADP(+). In terms of domain architecture, KARI C-terminal knotted spans 183 to 328 (TFREEVETDL…ARLRKMMPWI (146 aa)). Mg(2+)-binding residues include Asp191, Glu195, Glu227, and Glu231. Ser252 is a binding site for substrate.

Belongs to the ketol-acid reductoisomerase family. It depends on Mg(2+) as a cofactor.

It carries out the reaction (2R)-2,3-dihydroxy-3-methylbutanoate + NADP(+) = (2S)-2-acetolactate + NADPH + H(+). The catalysed reaction is (2R,3R)-2,3-dihydroxy-3-methylpentanoate + NADP(+) = (S)-2-ethyl-2-hydroxy-3-oxobutanoate + NADPH + H(+). It participates in amino-acid biosynthesis; L-isoleucine biosynthesis; L-isoleucine from 2-oxobutanoate: step 2/4. It functions in the pathway amino-acid biosynthesis; L-valine biosynthesis; L-valine from pyruvate: step 2/4. In terms of biological role, involved in the biosynthesis of branched-chain amino acids (BCAA). Catalyzes an alkyl-migration followed by a ketol-acid reduction of (S)-2-acetolactate (S2AL) to yield (R)-2,3-dihydroxy-isovalerate. In the isomerase reaction, S2AL is rearranged via a Mg-dependent methyl migration to produce 3-hydroxy-3-methyl-2-ketobutyrate (HMKB). In the reductase reaction, this 2-ketoacid undergoes a metal-dependent reduction by NADPH to yield (R)-2,3-dihydroxy-isovalerate. The sequence is that of Ketol-acid reductoisomerase (NADP(+)) from Zymomonas mobilis subsp. mobilis (strain ATCC 31821 / ZM4 / CP4).